A 273-amino-acid chain; its full sequence is 4-hydroxy-tetrahydrodipicolinate reductase (273 aa).

Residues 8–13, D35, 103–105, and 129–132 each bind NAD(+); these read GALGRM, GTT, and SQNY. H161 (proton donor/acceptor) is an active-site residue. (S)-2,3,4,5-tetrahydrodipicolinate is bound at residue H162. The Proton donor role is filled by K165. 171-172 provides a ligand contact to (S)-2,3,4,5-tetrahydrodipicolinate; it reads GT.

This sequence belongs to the DapB family.

It localises to the cytoplasm. It carries out the reaction (S)-2,3,4,5-tetrahydrodipicolinate + NAD(+) + H2O = (2S,4S)-4-hydroxy-2,3,4,5-tetrahydrodipicolinate + NADH + H(+). It catalyses the reaction (S)-2,3,4,5-tetrahydrodipicolinate + NADP(+) + H2O = (2S,4S)-4-hydroxy-2,3,4,5-tetrahydrodipicolinate + NADPH + H(+). The protein operates within amino-acid biosynthesis; L-lysine biosynthesis via DAP pathway; (S)-tetrahydrodipicolinate from L-aspartate: step 4/4. Catalyzes the conversion of 4-hydroxy-tetrahydrodipicolinate (HTPA) to tetrahydrodipicolinate. This is 4-hydroxy-tetrahydrodipicolinate reductase from Methanococcus aeolicus (strain ATCC BAA-1280 / DSM 17508 / OCM 812 / Nankai-3).